Reading from the N-terminus, the 157-residue chain is Arginine repressor (157 aa).

This sequence belongs to the ArgR family.

Its subcellular location is the cytoplasm. Its pathway is amino-acid biosynthesis; L-arginine biosynthesis [regulation]. Its function is as follows. Regulates arginine biosynthesis genes. The polypeptide is Arginine repressor (Colwellia psychrerythraea (strain 34H / ATCC BAA-681) (Vibrio psychroerythus)).